Consider the following 1364-residue polypeptide: Serine protease SepA autotransporter (1364 aa).

The signal sequence occupies residues 1–56; it reads MNKIYYLKYCHITKSLIAVSELARRVTCKSHRRLSRRVILTSVAALSLSSAWPALS. Residues 57–307 form the Peptidase S6 domain; it reads ATVSAEIPYQ…VVTTQDFLGQ (251 aa). Catalysis depends on charge relay system residues H134, D162, and S267. An Autotransporter domain is found at 1098-1364; sequence DTQGDAGVWA…AINANFRYVF (267 aa).

Cleaved to release the mature protein from the outer membrane. Cleavage is performed by an unknown protease.

It is found in the periplasm. The protein resides in the secreted. It localises to the cell surface. Its subcellular location is the cell outer membrane. Its activity is regulated as follows. Inhibited by the serine protease inhibitor PMSF, but not by benzamidine, alpha 1-antitrypsin, alpha 1-antichymotrypsin. Not inhibited by metalloprotease inhibitors such as EDTA and orthophenanthroline. Major protein secreted in laboratory media showing proteolytic activity. May be involved in invasion and destruction of host intestinal epithelium. This Shigella flexneri protein is Serine protease SepA autotransporter (sepA).